The chain runs to 643 residues: Replication protein E1 (643 aa).

A disordered region spans residues 28–60; it reads THGQSQVSSDEDEDETETREDLDFIDNRVPGDG. The segment covering 36–45 has biased composition (acidic residues); sequence SDEDEDETET. Positions 84–86 match the Nuclear localization signal motif; that stretch reads KRK. Phosphoserine; by host occurs at positions 90 and 103. A Nuclear export signal motif is present at residues 102–111; that stretch reads LSPRLDAISL. The tract at residues 119–179 is disordered; that stretch reads KRRLFETEPP…EADLTVHTPQ (61 aa). Positions 157-167 are enriched in basic and acidic residues; it reads VDVREEERQGG. The segment at 180–346 is DNA-binding region; it reads SGTDAAGSVL…QTLIGHSMED (167 aa). The SF3 helicase domain occupies 445–595; sequence VEFVSFLAAF…FPFASPGEPL (151 aa). 471–478 contributes to the ATP binding site; that stretch reads GPADTGKS. Residue Lys-552 forms a Glycyl lysine isopeptide (Lys-Gly) (interchain with G-Cter in SUMO) linkage.

The protein belongs to the papillomaviridae E1 protein family. As to quaternary structure, can form hexamers. Interacts with E2 protein; this interaction increases E1 DNA binding specificity. Interacts with host DNA polymerase subunit POLA2. Interacts with host single stranded DNA-binding protein RPA1. Interacts with host TOP1; this interaction stimulates the enzymatic activity of TOP1. In terms of processing, phosphorylated. Sumoylated.

The protein localises to the host nucleus. It catalyses the reaction Couples ATP hydrolysis with the unwinding of duplex DNA by translocating in the 3'-5' direction.. It carries out the reaction ATP + H2O = ADP + phosphate + H(+). In terms of biological role, ATP-dependent DNA 3'-5' helicase required for initiation of viral DNA replication. It forms a complex with the viral E2 protein. The E1-E2 complex binds to the replication origin which contains binding sites for both proteins. During the initial step, a dimer of E1 interacts with a dimer of protein E2 leading to a complex that binds the viral origin of replication with high specificity. Then, a second dimer of E1 displaces the E2 dimer in an ATP-dependent manner to form the E1 tetramer. Following this, two E1 monomers are added to each half of the site, which results in the formation of two E1 trimers on the viral ori. Subsequently, two hexamers will be created. The double hexamer acts as a bi-directional helicase machinery and unwinds the viral DNA and then recruits the host DNA polymerase to start replication. This is Replication protein E1 from Human papillomavirus 57.